Consider the following 60-residue polypeptide: UPF0291 protein CTC_01690.1 (60 aa).

The protein belongs to the UPF0291 family.

It is found in the cytoplasm. The sequence is that of UPF0291 protein CTC_01690.1 from Clostridium tetani (strain Massachusetts / E88).